A 517-amino-acid chain; its full sequence is Optineurin (517 aa).

Coiled-coil stretches lie at residues 15-127 (NLGS…DLVA) and 174-453 (KAES…LGRH). 2 disordered regions span residues 216-237 (KLEHADSSAQTSLPSAAETNAS) and 454-488 (SMSEMQRRHVPRGANPQGPTAPNNLPGGRGEWQQQ). Polar residues predominate over residues 222–237 (SSAQTSLPSAAETNAS). The segment at 487–517 (QQNIPDHACPKCGEVLPDLDSLQIHIMDCII) adopts a CCHC NOA-type zinc-finger fold. Zn(2+) is bound by residues Cys-495, Cys-498, His-511, and Cys-515.

The protein localises to the cytoplasm. It is found in the perinuclear region. It localises to the golgi apparatus. Its subcellular location is the trans-Golgi network. The protein resides in the cytoplasmic vesicle. The protein localises to the recycling endosome. It is found in the autophagosome. Functionally, probably part of the TNF-alpha signaling pathway that can shift the equilibrium toward induction of cell death. May act by regulating membrane trafficking and cellular morphogenesis. This chain is Optineurin (optn), found in Danio rerio (Zebrafish).